Consider the following 410-residue polypeptide: Peptidase T (410 aa).

Residue H79 coordinates Zn(2+). Residue D81 is part of the active site. Position 142 (D142) interacts with Zn(2+). E176 serves as the catalytic Proton acceptor. 3 residues coordinate Zn(2+): E177, D199, and H381.

Belongs to the peptidase M20B family. The cofactor is Zn(2+).

It localises to the cytoplasm. The enzyme catalyses Release of the N-terminal residue from a tripeptide.. Functionally, cleaves the N-terminal amino acid of tripeptides. The chain is Peptidase T from Listeria monocytogenes serotype 4b (strain F2365).